A 288-amino-acid chain; its full sequence is MGEFSTLLQQGNAWFFIPSAILLGVLHGLEPGHSKTMMAAFIIAIKGTIKQAVMLGLAATLSHTAVVWLIALGGMYVSRAFTAESVEPWLQLVSAIIILSTAFWMFWRTWKGERDGLANRLPAHTHHHHDHEHHHHDHDHDHHHDHQHVHISLKGLTDGSHAWQDAHERAHATDIQRRFHDREVTNGQILLFGLTGGLIPCPAAITVLLICIQLKAFTLGATMVLCFSIGLALTLVAVGVGAAISVQQAAKRWSGFNTLARKAPYFSSILIGLVGLYMGMHGYLGIIR.

Residues 1-12 lie on the Periplasmic side of the membrane; sequence MGEFSTLLQQGN. The chain crosses the membrane as a helical span at residues 13-33; sequence AWFFIPSAILLGVLHGLEPGH. Over 34–51 the chain is Cytoplasmic; sequence SKTMMAAFIIAIKGTIKQ. Residues 52 to 72 form a helical membrane-spanning segment; that stretch reads AVMLGLAATLSHTAVVWLIAL. At 73–85 the chain is on the periplasmic side; sequence GGMYVSRAFTAES. The helical transmembrane segment at 86–106 threads the bilayer; that stretch reads VEPWLQLVSAIIILSTAFWMF. At 107–188 the chain is on the cytoplasmic side; it reads WRTWKGERDG…FHDREVTNGQ (82 aa). Residues 125–137 show a composition bias toward basic residues; sequence THHHHDHEHHHHD. The interval 125 to 144 is disordered; sequence THHHHDHEHHHHDHDHDHHH. The helical transmembrane segment at 189 to 209 threads the bilayer; that stretch reads ILLFGLTGGLIPCPAAITVLL. Residues 210 to 223 are Periplasmic-facing; it reads ICIQLKAFTLGATM. Residues 224 to 244 traverse the membrane as a helical segment; the sequence is VLCFSIGLALTLVAVGVGAAI. Over 245-266 the chain is Cytoplasmic; the sequence is SVQQAAKRWSGFNTLARKAPYF. Residues 267-287 traverse the membrane as a helical segment; the sequence is SSILIGLVGLYMGMHGYLGII. Arg288 is a topological domain (periplasmic).

Belongs to the NiCoT transporter (TC 2.A.52) family. RcnA subfamily.

The protein resides in the cell inner membrane. In terms of biological role, efflux system for nickel and cobalt. This is Nickel/cobalt efflux system RcnA (rcnA) from Citrobacter koseri (strain ATCC BAA-895 / CDC 4225-83 / SGSC4696).